Reading from the N-terminus, the 308-residue chain is Uricase (308 aa).

Catalysis depends on charge relay system residues lysine 5 and threonine 65. Threonine 65, aspartate 66, phenylalanine 177, arginine 194, isoleucine 242, glutamine 243, and asparagine 269 together coordinate urate. Residues 283 to 308 (ASVLREPPAPTGFQQFSMDRGDLDEQ) are disordered.

This sequence belongs to the uricase family.

It carries out the reaction urate + O2 + H2O = 5-hydroxyisourate + H2O2. The protein operates within purine metabolism; urate degradation; (S)-allantoin from urate: step 1/3. Catalyzes the oxidation of uric acid to 5-hydroxyisourate, which is further processed to form (S)-allantoin. This is Uricase from Haloferax volcanii (strain ATCC 29605 / DSM 3757 / JCM 8879 / NBRC 14742 / NCIMB 2012 / VKM B-1768 / DS2) (Halobacterium volcanii).